Consider the following 494-residue polypeptide: MFLAKSIVCLALLAVANAQFDTNYASGRSGMVHLFEWKWDDIAAECENFLGPNGYAGVQVSPVNENAVKDSRPWWERYQPISYKLETRSGNEEQFASMVKRCNAVGVRTYVDVVFNHMAADGGTYGTGGSTASPSSKSYPGVPYSSLDFNPTCAISNYNDANEVRNCELVGLRDLNQGNSYVQDKVVEFLDHLIDLGVAGFRVDAAKHMWPADLAVIYGRLKNLNTDHGFASGSKAYIVQEVIDMGGEAISKSEYTGLGAITEFRHSDSIGKVFRGKDQLQYLTNWGTAWGFAASDRSLVFVDNHDNQRGHGAGGADVLTYKVPKQYKMASAFMLAHPFGTPRVMSSFSFTDTDQGPPTTDGHNIASPIFNSDNSCSGGWVCEHRWRQIYNMVAFRNTVGSDEIQNWWDNGSNQISFSRGSRGFVAFNNDNYDLNSSLQTGLPAGTYCDVISGSKSGSSCTGKTVTVGSDGRASIYIGSSEDDGVLAIHVNAKL.

A signal peptide spans 1-18 (MFLAKSIVCLALLAVANA). Glutamine 19 carries the post-translational modification Pyrrolidone carboxylic acid. Cysteine 46 and cysteine 102 form a disulfide bridge. Residues asparagine 116, arginine 165, and aspartate 174 each coordinate Ca(2+). A disulfide bridge links cysteine 153 with cysteine 167. Arginine 202 serves as a coordination point for chloride. Aspartate 204 (nucleophile) is an active-site residue. Histidine 208 serves as a coordination point for Ca(2+). The active-site Proton donor is the glutamate 241. Chloride is bound by residues asparagine 304 and arginine 343. 2 cysteine pairs are disulfide-bonded: cysteine 376–cysteine 382 and cysteine 448–cysteine 460.

It belongs to the glycosyl hydrolase 13 family. Monomer. It depends on Ca(2+) as a cofactor. Requires chloride as cofactor.

It catalyses the reaction Endohydrolysis of (1-&gt;4)-alpha-D-glucosidic linkages in polysaccharides containing three or more (1-&gt;4)-alpha-linked D-glucose units.. The sequence is that of Alpha-amylase B (Amy-d) from Drosophila melanogaster (Fruit fly).